Reading from the N-terminus, the 195-residue chain is Peptidyl-tRNA hydrolase (195 aa).

Residue tyrosine 17 participates in tRNA binding. The active-site Proton acceptor is histidine 22. Residues phenylalanine 68, asparagine 70, and asparagine 116 each coordinate tRNA.

This sequence belongs to the PTH family. Monomer.

The protein localises to the cytoplasm. The enzyme catalyses an N-acyl-L-alpha-aminoacyl-tRNA + H2O = an N-acyl-L-amino acid + a tRNA + H(+). In terms of biological role, hydrolyzes ribosome-free peptidyl-tRNAs (with 1 or more amino acids incorporated), which drop off the ribosome during protein synthesis, or as a result of ribosome stalling. Functionally, catalyzes the release of premature peptidyl moieties from peptidyl-tRNA molecules trapped in stalled 50S ribosomal subunits, and thus maintains levels of free tRNAs and 50S ribosomes. The sequence is that of Peptidyl-tRNA hydrolase from Shewanella denitrificans (strain OS217 / ATCC BAA-1090 / DSM 15013).